The following is a 487-amino-acid chain: Melanopsin (487 aa).

Positions 1-37 (MNPPSGPRTQEPSCVATPASPSRWDGYRSSTSSLDQP) are disordered. Over 1-67 (MNPPSGPRTQ…VDVPDHAHYT (67 aa)) the chain is Extracellular. A helical transmembrane segment spans residues 68–88 (LGTVILLVGLTGILGNLMVIY). Residues 89–102 (TFCRSRGLRTPANM) lie on the Cytoplasmic side of the membrane. Residues 103–123 (FIINLAVSDFFMSFTQAPVFF) traverse the membrane as a helical segment. Over 124-139 (ASSLHKRWLFGEAGCE) the chain is Extracellular. Cysteine 138 and cysteine 216 are disulfide-bonded. A helical membrane pass occupies residues 140-160 (FYAFCGALFGITSMITLMAIA). Residues 161 to 183 (LDRYLVITHPLATIGVVSKRRAA) lie on the Cytoplasmic side of the membrane. Residues 184–204 (LVLLGVWLYALAWSLPPFFGW) form a helical membrane-spanning segment. Residues 205–233 (SAYVPEGLLTSCSWDYMSFTPSVRAYTML) are Extracellular-facing. A helical transmembrane segment spans residues 234–254 (LFCFVFFLPLLVIVYCYIFIF). Residues 255 to 291 (RAIRETGQALQTFRACEGGGRSPRQRQRLQREWKMAK) lie on the Cytoplasmic side of the membrane. The chain crosses the membrane as a helical span at residues 292–312 (IELLVILLFVLSWAPYSIVAL). Topologically, residues 313–327 (MAFAGYAHVLTPYMN) are extracellular. A helical transmembrane segment spans residues 328-348 (SVPAVIAKASAIHNPIIYAIT). An N6-(retinylidene)lysine modification is found at lysine 335. Over 349–487 (HPKYRMAIAQ…LPLHPGWAFH (139 aa)) the chain is Cytoplasmic. Positions 436–459 (CSQGLEDREAKAPVRPQGREAETP) are disordered. Basic and acidic residues predominate over residues 440–457 (LEDREAKAPVRPQGREAE).

Belongs to the G-protein coupled receptor 1 family. Opsin subfamily. Eye. Expression is restricted within the ganglion cell layer.

It localises to the cell membrane. Its subcellular location is the cell projection. It is found in the axon. The protein localises to the dendrite. The protein resides in the perikaryon. Its function is as follows. Photoreceptor that binds cis-retinaldehydes. Contributes to pupillar reflex, photoentrainment and other non-image forming responses to light. May be involved in the optokinetic visual tracking response. May be involved in the regulation of retinal hyaloid vessel growth and regression. This Felis catus (Cat) protein is Melanopsin (OPN4).